The chain runs to 845 residues: Alanine--tRNA ligase (845 aa).

Zn(2+) contacts are provided by His552, His556, Cys653, and His657.

This sequence belongs to the class-II aminoacyl-tRNA synthetase family. Requires Zn(2+) as cofactor.

It is found in the cytoplasm. The catalysed reaction is tRNA(Ala) + L-alanine + ATP = L-alanyl-tRNA(Ala) + AMP + diphosphate. In terms of biological role, catalyzes the attachment of alanine to tRNA(Ala) in a two-step reaction: alanine is first activated by ATP to form Ala-AMP and then transferred to the acceptor end of tRNA(Ala). Also edits incorrectly charged Ser-tRNA(Ala) and Gly-tRNA(Ala) via its editing domain. The protein is Alanine--tRNA ligase of Campylobacter fetus subsp. fetus (strain 82-40).